The chain runs to 61 residues: Putative defensin-like protein 72 (61 aa).

4 cysteine pairs are disulfide-bonded: C21–C59, C25–C48, C34–C57, and C38–C58.

Belongs to the DEFL family.

This chain is Putative defensin-like protein 72, found in Arabidopsis thaliana (Mouse-ear cress).